The following is a 255-amino-acid chain: Sugar fermentation stimulation protein homolog (255 aa).

The protein belongs to the SfsA family.

The polypeptide is Sugar fermentation stimulation protein homolog (Synechococcus sp. (strain WH7803)).